Here is an 808-residue protein sequence, read N- to C-terminus: Homeobox-leucine zipper protein HDG1 (808 aa).

The segment at 57-121 (LQTNGEMSRN…KRYHRHTPKQ (65 aa)) is disordered. Over residues 79–90 (SRGEDVESRSES) the composition is skewed to basic and acidic residues. The span at 108–119 (LKKKKRYHRHTP) shows a compositional bias: basic residues. A DNA-binding region (homeobox) is located at residues 110–169 (KKKRYHRHTPKQIQDLESVFKECAHPDEKQRLDLSRRLNLDPRQVKFWFQNRRTQMKTQI). Residues 158–233 (FQNRRTQMKT…SRLKDELDRV (76 aa)) are a coiled coil. The region spanning 310–541 (DFDQRSRYLD…LQRQCECLTI (232 aa)) is the START domain.

The protein belongs to the HD-ZIP homeobox family. Class IV subfamily. As to quaternary structure, interacts with CFL1. Binds with BBM. Expressed in trichomes forming at the base of young leaves, in endodermal cell lines around emergent lateral roots and in the epidermal layer of the stamen filament.

The protein localises to the nucleus. In terms of biological role, probable transcription factor. Promotes cuticle development probably by modulating the expression of the downstream genes BDG and FDH, possibly repressed in a CFL1-dependent manner. Involved, together with PDF2, in the regulation of flower organs development by promoting the expression of APETALA 3 (AP3) in the epidermis and internal cell layers of developing flowers. In opposition to BBM, seems to promote cell differentiation and giant cell identity via transcriptional repression of meristem and cell proliferation genes. The sequence is that of Homeobox-leucine zipper protein HDG1 from Arabidopsis thaliana (Mouse-ear cress).